A 185-amino-acid polypeptide reads, in one-letter code: Keratin-associated protein 4-8 (185 aa).

A run of 25 repeats spans residues 14-18, 19-23, 24-28, 39-43, 44-48, 49-53, 54-58, 59-63, 64-68, 69-73, 74-78, 79-83, 84-88, 89-93, 94-98, 99-103, 104-108, 109-113, 114-118, 119-123, 124-128, 134-138, 139-143, 144-148, and 149-164. The tract at residues 14-164 is 25 X 5 AA repeats of C-C-[IKRQVHEC]-[SPRT]-[STCVQPR]; sequence GCGQDLCQET…CGRVSCHTTC (151 aa).

Belongs to the KRTAP type 4 family. As to quaternary structure, interacts with hair keratins. As to expression, expressed in the hair follicles.

Functionally, in the hair cortex, hair keratin intermediate filaments are embedded in an interfilamentous matrix, consisting of hair keratin-associated proteins (KRTAP), which are essential for the formation of a rigid and resistant hair shaft through their extensive disulfide bond cross-linking with abundant cysteine residues of hair keratins. The matrix proteins include the high-sulfur and high-glycine-tyrosine keratins. This is Keratin-associated protein 4-8 (KRTAP4-8) from Homo sapiens (Human).